We begin with the raw amino-acid sequence, 189 residues long: Endoribonuclease YbeY (189 aa).

Zn(2+) is bound by residues histidine 146, histidine 150, and histidine 156.

Belongs to the endoribonuclease YbeY family. Zn(2+) serves as cofactor.

The protein resides in the cytoplasm. Its function is as follows. Single strand-specific metallo-endoribonuclease involved in late-stage 70S ribosome quality control and in maturation of the 3' terminus of the 16S rRNA. The protein is Endoribonuclease YbeY of Prochlorococcus marinus (strain MIT 9211).